Here is a 329-residue protein sequence, read N- to C-terminus: Short-chain dehydrogenase/reductase tropG (329 aa).

The NADP(+) site is built by Lys57, Asp86, Asn113, Tyr203, and Lys207. The active-site Proton acceptor is Tyr203. The active-site Lowers pKa of active site Tyr is the Lys207.

This sequence belongs to the short-chain dehydrogenases/reductases (SDR) family.

The protein operates within secondary metabolite biosynthesis. Functionally, short-chain dehydrogenase/reductase; part of the gene cluster that mediates the biosynthesis of the tropolone class of fungal maleic anhydrides. The pathway begins with the synthesis of 3-methylorcinaldehyde by the non-reducing polyketide synthase (PKS) tropA. 3-methylorcinaldehyde is the substrate for the FAD-dependent monooxygenase tropB to yield a dearomatized hydroxycyclohexadione. The 2-oxoglutarate-dependent dioxygenase tropC then performs the oxidative ring expansion to provide the first tropolone metabolite stipitaldehyde. Trop D converts stipitaldehyde into stipitacetal which is in turn converted to stipitalide by the short-chain dehydrogenase/reductase tropE. The next steps involve tropF, tropG, tropH, tropI and tropJ to form successive tropolone maleic anhydrides including stipitaldehydic, stipitatonic and stipitatic acids. This chain is Short-chain dehydrogenase/reductase tropG, found in Talaromyces stipitatus (strain ATCC 10500 / CBS 375.48 / QM 6759 / NRRL 1006) (Penicillium stipitatum).